Here is a 657-residue protein sequence, read N- to C-terminus: L-type lectin-domain containing receptor kinase I.8 (657 aa).

The first 23 residues, methionine 1–glutamine 23, serve as a signal peptide directing secretion. Topologically, residues glutamine 24–serine 282 are extracellular. The tract at residues glutamate 25–serine 257 is legume-lectin like. Residues asparagine 74, asparagine 124, asparagine 181, asparagine 204, and asparagine 225 are each glycosylated (N-linked (GlcNAc...) asparagine). The chain crosses the membrane as a helical span at residues leucine 283–alanine 303. Topologically, residues tyrosine 304–arginine 657 are cytoplasmic. Positions phenylalanine 339–leucine 611 constitute a Protein kinase domain. ATP is bound by residues leucine 345–valine 353 and lysine 366. The active-site Proton acceptor is aspartate 462.

This sequence in the C-terminal section; belongs to the protein kinase superfamily. Ser/Thr protein kinase family. In the N-terminal section; belongs to the leguminous lectin family.

It is found in the cell membrane. It catalyses the reaction L-seryl-[protein] + ATP = O-phospho-L-seryl-[protein] + ADP + H(+). It carries out the reaction L-threonyl-[protein] + ATP = O-phospho-L-threonyl-[protein] + ADP + H(+). Involved in resistance response to the pathogenic fungus Alternaria brassicicola. This chain is L-type lectin-domain containing receptor kinase I.8, found in Arabidopsis thaliana (Mouse-ear cress).